Consider the following 255-residue polypeptide: Cytochrome b561 and DOMON domain-containing protein At5g48750 (255 aa).

A signal peptide spans 1–27; sequence MFLSSRTIFVGLCFLFVLAPCFTRATT. In terms of domain architecture, DOMON spans 54 to 169; that stretch reads LDSFLHYSYV…TVVNHLWQDG (116 aa). In terms of domain architecture, Cytochrome b561 spans 176–255; the sequence is RLGMHAMSGN…DPTWFYILIL (80 aa). Residues 216–236 traverse the membrane as a helical segment; the sequence is IHGLVNAVCWGIFIPIGVMAA.

Its subcellular location is the membrane. The chain is Cytochrome b561 and DOMON domain-containing protein At5g48750 from Arabidopsis thaliana (Mouse-ear cress).